Reading from the N-terminus, the 167-residue chain is SsrA-binding protein (167 aa).

Residues 139–158 show a composition bias toward basic and acidic residues; that stretch reads QNHDKRDAAKDRDWQRDKQR. The segment at 139–167 is disordered; it reads QNHDKRDAAKDRDWQRDKQRVMRRHNRDA.

Belongs to the SmpB family.

The protein resides in the cytoplasm. Functionally, required for rescue of stalled ribosomes mediated by trans-translation. Binds to transfer-messenger RNA (tmRNA), required for stable association of tmRNA with ribosomes. tmRNA and SmpB together mimic tRNA shape, replacing the anticodon stem-loop with SmpB. tmRNA is encoded by the ssrA gene; the 2 termini fold to resemble tRNA(Ala) and it encodes a 'tag peptide', a short internal open reading frame. During trans-translation Ala-aminoacylated tmRNA acts like a tRNA, entering the A-site of stalled ribosomes, displacing the stalled mRNA. The ribosome then switches to translate the ORF on the tmRNA; the nascent peptide is terminated with the 'tag peptide' encoded by the tmRNA and targeted for degradation. The ribosome is freed to recommence translation, which seems to be the essential function of trans-translation. This is SsrA-binding protein from Xanthomonas euvesicatoria pv. vesicatoria (strain 85-10) (Xanthomonas campestris pv. vesicatoria).